The sequence spans 313 residues: Protein-methionine-sulfoxide reductase catalytic subunit MsrP (313 aa).

Positions 1 to 44 (MARWRPDTAEREATPEALYLRRREFLALGAAGAVGLLLPRGARA) form a signal peptide, tat-type signal. Mo-molybdopterin-binding positions include Asn-76, 79–80 (YE), Cys-134, Thr-169, Asn-217, Arg-222, and 233–235 (GAK).

Belongs to the MsrP family. Heterodimer of a catalytic subunit (MsrP) and a heme-binding subunit (MsrQ). Mo-molybdopterin serves as cofactor. Predicted to be exported by the Tat system. The position of the signal peptide cleavage has not been experimentally proven.

It localises to the periplasm. The enzyme catalyses L-methionyl-[protein] + a quinone + H2O = L-methionyl-(S)-S-oxide-[protein] + a quinol. It carries out the reaction L-methionyl-[protein] + a quinone + H2O = L-methionyl-(R)-S-oxide-[protein] + a quinol. Its function is as follows. Part of the MsrPQ system that repairs oxidized periplasmic proteins containing methionine sulfoxide residues (Met-O), using respiratory chain electrons. Thus protects these proteins from oxidative-stress damage caused by reactive species of oxygen and chlorine generated by the host defense mechanisms. MsrPQ is essential for the maintenance of envelope integrity under bleach stress, rescuing a wide series of structurally unrelated periplasmic proteins from methionine oxidation. The catalytic subunit MsrP is non-stereospecific, being able to reduce both (R-) and (S-) diastereoisomers of methionine sulfoxide. This is Protein-methionine-sulfoxide reductase catalytic subunit MsrP from Anaeromyxobacter dehalogenans (strain 2CP-C).